Consider the following 411-residue polypeptide: MGERRKTRQAEVNIGMVGHVDHGKTTLTKALTGVWTDTHSEELRRGITIKIGFADAEIRRCPNCGRYSTSPVCPYCGHETEFVRRVSFIDAPGHEALMTTMLAGASLMDGAILVIAANEPCPRPQTREHLMALQIIGQKNIIIAQNKIELVDKEKALENYRQIKEFIKGTVAENAPIIPISALHGANIDVLVKAIEDFIPTPKRDPNKPPKMLVLRSFDVNKPGTPPEKLVGGVLGGSIVQGKLKVGDEIEIRPGIPYEEHGRIRYEPITTEIVSLQAGGQFVEEAYPGGLVGVGTKLDPYLTKGDLMAGNVVGKPGKLPPVWDSLRLEVHLLERVVGTEQELRVEPIKRKEVLLLNVGTARTMGLVTNLGKDEIEVKLQIPVCAEPGDRVAISRQIGSRWRLIGYGIIKE.

The 195-residue stretch at 9 to 203 (QAEVNIGMVG…AIEDFIPTPK (195 aa)) folds into the tr-type G domain. Positions 18–25 (GHVDHGKT) are G1. Residues aspartate 21, threonine 25, glycine 46, and threonine 48 each contribute to the Mg(2+) site. Residue 21-26 (DHGKTT) coordinates GTP. The segment at 46–50 (GITIK) is G2. Residues cysteine 61, cysteine 64, cysteine 73, and cysteine 76 each contribute to the Zn(2+) site. A G3 region spans residues 90-93 (DAPG). GTP is bound by residues 146-149 (NKIE) and 181-183 (SAL). Positions 146–149 (NKIE) are G4. The interval 181-183 (SAL) is G5.

It belongs to the TRAFAC class translation factor GTPase superfamily. Classic translation factor GTPase family. EIF2G subfamily. In terms of assembly, heterotrimer composed of an alpha, a beta and a gamma chain. Mg(2+) serves as cofactor.

The catalysed reaction is GTP + H2O = GDP + phosphate + H(+). In terms of biological role, eIF-2 functions in the early steps of protein synthesis by forming a ternary complex with GTP and initiator tRNA. This is Translation initiation factor 2 subunit gamma from Pyrococcus horikoshii (strain ATCC 700860 / DSM 12428 / JCM 9974 / NBRC 100139 / OT-3).